Reading from the N-terminus, the 532-residue chain is Intercellular adhesion molecule 1 (532 aa).

The N-terminal stretch at 1-27 (MAPSSPRPALPALLVLLGALFPGPGNA) is a signal peptide. Over 28 to 480 (QTSVSPPKVI…TVNVLSPRYE (453 aa)) the chain is Extracellular. Ig-like C2-type domains lie at 41–103 (GGSV…QSTA) and 128–193 (GKDL…LDLR). 3 disulfides stabilise this stretch: Cys48–Cys92, Cys52–Cys96, and Cys135–Cys186. The N-linked (GlcNAc...) asparagine glycan is linked to Asn145. A Cell attachment site; atypical motif is present at residues 152–154 (RGE). Residues Asn183, Asn202, Asn267, and Asn296 are each glycosylated (N-linked (GlcNAc...) asparagine). 2 consecutive Ig-like C2-type domains span residues 230-297 (DTQG…LGNQ) and 325-378 (GTEV…LEVA). Cys237 and Cys290 are disulfide-bonded. A disulfide bridge links Cys332 with Cys371. Asn385 and Asn406 each carry an N-linked (GlcNAc...) asparagine glycan. Cystine bridges form between Cys403-Cys419, Cys419-Cys457, and Cys431-Cys457. The 53-residue stretch at 412-464 (NSQQTPMCQASGNPLPELKCLKDGTFPLPVGESVTVTRDLEGTYLCRARSTQG) folds into the Ig-like C2-type 5 domain. A helical membrane pass occupies residues 481–503 (IVIITVVAAAVIMGTAGLSTYLY). The Cytoplasmic segment spans residues 504-532 (NRQRKIRKYRLQQAQKGTPMKPNTQATPP). Thr521 and Thr530 each carry phosphothreonine.

Belongs to the immunoglobulin superfamily. ICAM family. As to quaternary structure, homodimer. Interacts with MUC1 and promotes cell aggregation in epithelial cells. Interacts with ARHGEF26/SGEF. Interacts (on T cell side) with CD81, CD247 and CD9 at immunological synapses between antigen-presenting cells and T cells. Monoubiquitinated, which is promoted by MARCH9 and leads to endocytosis.

The protein resides in the membrane. Functionally, ICAM proteins are ligands for the leukocyte adhesion protein LFA-1 (integrin alpha-L/beta-2). During leukocyte trans-endothelial migration, ICAM1 engagement promotes the assembly of endothelial apical cups through ARHGEF26/SGEF and RHOG activation. This Pan troglodytes (Chimpanzee) protein is Intercellular adhesion molecule 1 (ICAM1).